Consider the following 785-residue polypeptide: Protein kintoun (785 aa).

Composition is skewed to basic and acidic residues over residues 622–638 (EHNE…RDTS) and 662–679 (HNIE…KEPK). Disordered stretches follow at residues 622 to 698 (EHNE…DSHL) and 719 to 749 (KSSV…ASSN). The segment covering 681–695 (TSCTAESTSGQQPND) has biased composition (polar residues). A compositionally biased stretch (acidic residues) spans 728 to 737 (SDLDEDDMPD).

It belongs to the PIH1 family. Kintoun subfamily.

It localises to the cytoplasm. The protein localises to the dynein axonemal particle. Its function is as follows. Required for cytoplasmic pre-assembly of axonemal dyneins, thereby playing a central role in motility in cilia and flagella. Involved in pre-assembly of dynein arm complexes in the cytoplasm before intraflagellar transport loads them for the ciliary compartment. In Xenopus tropicalis (Western clawed frog), this protein is Protein kintoun.